Reading from the N-terminus, the 430-residue chain is Adenylosuccinate synthetase (430 aa).

GTP contacts are provided by residues 12-18 (GDEGKGK) and 40-42 (GHT). The active-site Proton acceptor is Asp13. Residues Asp13 and Gly40 each coordinate Mg(2+). IMP is bound by residues 13–16 (DEGK), 38–41 (NAGH), Thr128, Arg142, Gln223, Thr238, and Arg302. Residue His41 is the Proton donor of the active site. Position 298–304 (298–304 (TTTGRPR)) interacts with substrate. GTP is bound by residues Arg304, 330–332 (LLD), and 412–414 (SVG).

The protein belongs to the adenylosuccinate synthetase family. Homodimer. The cofactor is Mg(2+).

It localises to the cytoplasm. The catalysed reaction is IMP + L-aspartate + GTP = N(6)-(1,2-dicarboxyethyl)-AMP + GDP + phosphate + 2 H(+). Its pathway is purine metabolism; AMP biosynthesis via de novo pathway; AMP from IMP: step 1/2. Its function is as follows. Plays an important role in the de novo pathway of purine nucleotide biosynthesis. Catalyzes the first committed step in the biosynthesis of AMP from IMP. The polypeptide is Adenylosuccinate synthetase (Listeria innocua serovar 6a (strain ATCC BAA-680 / CLIP 11262)).